The chain runs to 405 residues: Tryptophan synthase beta chain (405 aa).

Residue lysine 98 is modified to N6-(pyridoxal phosphate)lysine.

It belongs to the TrpB family. Tetramer of two alpha and two beta chains. Pyridoxal 5'-phosphate serves as cofactor.

The enzyme catalyses (1S,2R)-1-C-(indol-3-yl)glycerol 3-phosphate + L-serine = D-glyceraldehyde 3-phosphate + L-tryptophan + H2O. Its pathway is amino-acid biosynthesis; L-tryptophan biosynthesis; L-tryptophan from chorismate: step 5/5. Functionally, the beta subunit is responsible for the synthesis of L-tryptophan from indole and L-serine. The polypeptide is Tryptophan synthase beta chain (Afipia carboxidovorans (strain ATCC 49405 / DSM 1227 / KCTC 32145 / OM5) (Oligotropha carboxidovorans)).